Here is an 81-residue protein sequence, read N- to C-terminus: uncharacterized protein (81 aa).

2 consecutive transmembrane segments (helical) span residues 10 to 30 and 56 to 76; these read FFVL…FLLL and VLYL…AFAI.

The protein localises to the host membrane. This is an uncharacterized protein from Acidianus two-tailed virus (ATV).